We begin with the raw amino-acid sequence, 428 residues long: Histidine--tRNA ligase (428 aa).

The protein belongs to the class-II aminoacyl-tRNA synthetase family. As to quaternary structure, homodimer.

It localises to the cytoplasm. It catalyses the reaction tRNA(His) + L-histidine + ATP = L-histidyl-tRNA(His) + AMP + diphosphate + H(+). In Mesomycoplasma hyopneumoniae (strain 7448) (Mycoplasma hyopneumoniae), this protein is Histidine--tRNA ligase.